A 339-amino-acid chain; its full sequence is GTPase Obg (339 aa).

In terms of domain architecture, Obg spans 1-159 (MKFVDEAFVR…RELKLELKLL (159 aa)). The segment at 127–147 (NTHFKSSTNRAPRRTTSGEEG) is disordered. Residues 160–333 (ADVGLLGLPN…LCYDLMSFLE (174 aa)) enclose the OBG-type G domain. Residues 166–173 (GLPNAGKS), 191–195 (FTTLY), 213–216 (DIPG), 283–286 (NKID), and 314–316 (SAI) each bind GTP. Positions 173 and 193 each coordinate Mg(2+).

The protein belongs to the TRAFAC class OBG-HflX-like GTPase superfamily. OBG GTPase family. Monomer. Mg(2+) serves as cofactor.

It localises to the cytoplasm. Its function is as follows. An essential GTPase which binds GTP, GDP and possibly (p)ppGpp with moderate affinity, with high nucleotide exchange rates and a fairly low GTP hydrolysis rate. Plays a role in control of the cell cycle, stress response, ribosome biogenesis and in those bacteria that undergo differentiation, in morphogenesis control. The sequence is that of GTPase Obg from Coxiella burnetii (strain CbuK_Q154) (Coxiella burnetii (strain Q154)).